A 130-amino-acid chain; its full sequence is MAKPSKTTTKKKVKKTVVDGIAHIHASFNNTIVTITDRQGNTLSWATAGGSGFRGSRKSTPFAAQVAAERAGQAAQEYGLKNLDVEVKGPGPGRESAVRALNNVGYKITNITDVTPIPHNGCRPPKKRRV.

The protein belongs to the universal ribosomal protein uS11 family. Part of the 30S ribosomal subunit. Interacts with proteins S7 and S18. Binds to IF-3.

In terms of biological role, located on the platform of the 30S subunit, it bridges several disparate RNA helices of the 16S rRNA. Forms part of the Shine-Dalgarno cleft in the 70S ribosome. This chain is Small ribosomal subunit protein uS11, found in Teredinibacter turnerae (strain ATCC 39867 / T7901).